A 340-amino-acid chain; its full sequence is Tetraacyldisaccharide 4'-kinase (340 aa).

Residue 47 to 54 (SVGGTGKT) participates in ATP binding.

Belongs to the LpxK family.

It carries out the reaction a lipid A disaccharide + ATP = a lipid IVA + ADP + H(+). It functions in the pathway glycolipid biosynthesis; lipid IV(A) biosynthesis; lipid IV(A) from (3R)-3-hydroxytetradecanoyl-[acyl-carrier-protein] and UDP-N-acetyl-alpha-D-glucosamine: step 6/6. Its function is as follows. Transfers the gamma-phosphate of ATP to the 4'-position of a tetraacyldisaccharide 1-phosphate intermediate (termed DS-1-P) to form tetraacyldisaccharide 1,4'-bis-phosphate (lipid IVA). This is Tetraacyldisaccharide 4'-kinase from Flavobacterium johnsoniae (strain ATCC 17061 / DSM 2064 / JCM 8514 / BCRC 14874 / CCUG 350202 / NBRC 14942 / NCIMB 11054 / UW101) (Cytophaga johnsonae).